The following is a 101-amino-acid chain: YcgL domain-containing protein ACIAD2309 (101 aa).

Positions 1–93 (MHCDIYRSSK…PPEGFINPSD (93 aa)) constitute a YcgL domain.

This is YcgL domain-containing protein ACIAD2309 from Acinetobacter baylyi (strain ATCC 33305 / BD413 / ADP1).